A 292-amino-acid chain; its full sequence is 11-beta-hydroxysteroid dehydrogenase 1 (292 aa).

At 1 to 7 (MAFMKKY) the chain is on the cytoplasmic side. Residues 8 to 24 (LLPILGLFMAYYYYSAN) traverse the membrane as a helical; Signal-anchor for type II membrane protein segment. The Lumenal portion of the chain corresponds to 25–292 (EEFRPEMLQG…SYNMDRFINK (268 aa)). Residues 41 to 67 (GASK…TARS), 92 to 93 (TM), and 119 to 121 (NHI) contribute to the NADP(+) site. 2 N-linked (GlcNAc...) asparagine glycosylation sites follow: Asn123 and Asn162. Ser170 provides a ligand contact to substrate. Residue Tyr183 is the Proton acceptor of the active site. An NADP(+)-binding site is contributed by 183-187 (YSASK). Asn207 is a glycosylation site (N-linked (GlcNAc...) asparagine). 218–222 (IDTET) serves as a coordination point for NADP(+).

Belongs to the short-chain dehydrogenases/reductases (SDR) family. In terms of assembly, homodimer. Post-translationally, glycosylated. As to expression, widely expressed, highest expression in liver, lower in testis, ovary, lung, foreskin fibroblasts, and much lower in kidney. Expressed in liver (at protein level). Expressed in the basal cells of the corneal epithelium and in the ciliary nonpigmented epithelium (both at mRNA and at protein level).

It localises to the endoplasmic reticulum membrane. The enzyme catalyses an 11beta-hydroxysteroid + NADP(+) = an 11-oxosteroid + NADPH + H(+). It carries out the reaction cortisone + NADPH + H(+) = cortisol + NADP(+). It catalyses the reaction corticosterone + NADP(+) = 11-dehydrocorticosterone + NADPH + H(+). The catalysed reaction is a 7beta-hydroxysteroid + NADP(+) = a 7-oxosteroid + NADPH + H(+). The enzyme catalyses 7-oxocholesterol + NADPH + H(+) = 7beta-hydroxycholesterol + NADP(+). It carries out the reaction chenodeoxycholate + NADP(+) = 7-oxolithocholate + NADPH + H(+). It catalyses the reaction 7-oxolithocholate + NADPH + H(+) = ursodeoxycholate + NADP(+). The catalysed reaction is glycochenodeoxycholate + NADP(+) = 7-oxoglycolithocholate + NADPH + H(+). The enzyme catalyses taurochenodeoxycholate + NADP(+) = 7-oxotaurolithocholate + NADPH + H(+). It carries out the reaction tauroursodeoxycholate + NADP(+) = 7-oxotaurolithocholate + NADPH + H(+). It catalyses the reaction glycoursodeoxycholate + NADP(+) = 7-oxoglycolithocholate + NADPH + H(+). The catalysed reaction is 7-oxopregnenolone + NADPH + H(+) = 7beta-hydroxypregnenolone + NADP(+). The enzyme catalyses 3beta,7alpha-dihydroxyandrost-5-en-17-one + NADP(+) = 3beta-hydroxy-5-androstene-7,17-dione + NADPH + H(+). It carries out the reaction 3beta-hydroxy-5-androstene-7,17-dione + NADPH + H(+) = 3beta,7beta-dihydroxyandrost-5-en-17-one + NADP(+). It catalyses the reaction 3beta-hydroxy-5alpha-androstane-7,17-dione + NADPH + H(+) = 3beta,7beta-dihydroxy-5alpha-androstan-17-one + NADP(+). The protein operates within steroid metabolism. Hexose-6-phosphate dehydrogenase (H6PD) provides cosubstrate NADPH, and the glucose-6-phosphate transporter in the ER-membrane supplies the substrate for H6PDH, their activities stimulate the reduction of cortisone and abolish the oxidation of cortisol. Its function is as follows. Controls the reversible conversion of biologically active glucocorticoids such as cortisone to cortisol, and 11-dehydrocorticosterone to corticosterone in the presence of NADP(H). Participates in the corticosteroid receptor-mediated anti-inflammatory response, as well as metabolic and homeostatic processes. Plays a role in the secretion of aqueous humor in the eye, maintaining a normotensive, intraocular environment. Bidirectional in vitro, predominantly functions as a reductase in vivo, thereby increasing the concentration of active glucocorticoids. It has broad substrate specificity, besides glucocorticoids, it accepts other steroid and sterol substrates. Interconverts 7-oxo- and 7-hydroxy-neurosteroids such as 7-oxopregnenolone and 7beta-hydroxypregnenolone, 7-oxodehydroepiandrosterone (3beta-hydroxy-5-androstene-7,17-dione) and 7beta-hydroxydehydroepiandrosterone (3beta,7beta-dihydroxyandrost-5-en-17-one), among others. Catalyzes the stereo-specific conversion of the major dietary oxysterol, 7-ketocholesterol (7-oxocholesterol), into the more polar 7-beta-hydroxycholesterol metabolite. 7-oxocholesterol is one of the most important oxysterols, it participates in several events such as induction of apoptosis, accumulation in atherosclerotic lesions, lipid peroxidation, and induction of foam cell formation. Mediates the 7-oxo reduction of 7-oxolithocholate mainly to chenodeoxycholate, and to a lesser extent to ursodeoxycholate, both in its free form and when conjugated to glycine or taurine, providing a link between glucocorticoid activation and bile acid metabolism. Catalyzes the synthesis of 7-beta-25-dihydroxycholesterol from 7-oxo-25-hydroxycholesterol in vitro, which acts as a ligand for the G-protein-coupled receptor (GPCR) Epstein-Barr virus-induced gene 2 (EBI2) and may thereby regulate immune cell migration. The protein is 11-beta-hydroxysteroid dehydrogenase 1 of Homo sapiens (Human).